The chain runs to 398 residues: Dual-specificity RNA methyltransferase RlmN (398 aa).

Glu100 (proton acceptor) is an active-site residue. One can recognise a Radical SAM core domain in the interval 106–345; it reads DGDRGTLCVS…TTVRTTRGDD (240 aa). The cysteines at positions 113 and 350 are disulfide-linked. [4Fe-4S] cluster-binding residues include Cys120, Cys124, and Cys127. Residues 174–175, Ser206, 228–230, and Asn307 each bind S-adenosyl-L-methionine; these read GE and SLH. Cys350 acts as the S-methylcysteine intermediate in catalysis.

It belongs to the radical SAM superfamily. RlmN family. [4Fe-4S] cluster is required as a cofactor.

The protein localises to the cytoplasm. It catalyses the reaction adenosine(2503) in 23S rRNA + 2 reduced [2Fe-2S]-[ferredoxin] + 2 S-adenosyl-L-methionine = 2-methyladenosine(2503) in 23S rRNA + 5'-deoxyadenosine + L-methionine + 2 oxidized [2Fe-2S]-[ferredoxin] + S-adenosyl-L-homocysteine. The enzyme catalyses adenosine(37) in tRNA + 2 reduced [2Fe-2S]-[ferredoxin] + 2 S-adenosyl-L-methionine = 2-methyladenosine(37) in tRNA + 5'-deoxyadenosine + L-methionine + 2 oxidized [2Fe-2S]-[ferredoxin] + S-adenosyl-L-homocysteine. Its function is as follows. Specifically methylates position 2 of adenine 2503 in 23S rRNA and position 2 of adenine 37 in tRNAs. m2A2503 modification seems to play a crucial role in the proofreading step occurring at the peptidyl transferase center and thus would serve to optimize ribosomal fidelity. The chain is Dual-specificity RNA methyltransferase RlmN from Saccharophagus degradans (strain 2-40 / ATCC 43961 / DSM 17024).